A 171-amino-acid chain; its full sequence is Adenine phosphoribosyltransferase (171 aa).

The protein belongs to the purine/pyrimidine phosphoribosyltransferase family. In terms of assembly, homodimer.

It localises to the cytoplasm. The enzyme catalyses AMP + diphosphate = 5-phospho-alpha-D-ribose 1-diphosphate + adenine. It participates in purine metabolism; AMP biosynthesis via salvage pathway; AMP from adenine: step 1/1. Its function is as follows. Catalyzes a salvage reaction resulting in the formation of AMP, that is energically less costly than de novo synthesis. In Methylococcus capsulatus (strain ATCC 33009 / NCIMB 11132 / Bath), this protein is Adenine phosphoribosyltransferase.